The following is a 75-amino-acid chain: Large ribosomal subunit protein bL31 (75 aa).

It belongs to the bacterial ribosomal protein bL31 family. Type A subfamily. Part of the 50S ribosomal subunit.

Functionally, binds the 23S rRNA. This chain is Large ribosomal subunit protein bL31, found in Acidiphilium cryptum (strain JF-5).